Consider the following 30-residue polypeptide: Cyclotide mech-1 (30 aa).

Positions G1–D30 form a cross-link, cyclopeptide (Gly-Asp). 3 disulfides stabilise this stretch: C5–C20, C9–C22, and C14–C27.

In terms of processing, this is a cyclic peptide. Contains 3 disulfide bonds.

Functionally, probably participates in a plant defense mechanism (Potential). Binds to and induces leakage in phospholipd membranes, particularly ones containing 1-palmitoyl-2-oleophosphatidylethanolamine (POPE). Not active against Gram-negative bacterium E.coli ATCC 25922 or Gram-positive bacterium S.aureus ATCC 25923 up to a concentration of 64 uM. This Melicytus chathamicus (Chatham Island mahoe) protein is Cyclotide mech-1.